The following is a 275-amino-acid chain: Membrane protein insertase YidC 2 (275 aa).

The first 21 residues, 1–21 (MKKKNIILISVLLGALLLLTG), serve as a signal peptide directing secretion. Cysteine 22 is lipidated: N-palmitoyl cysteine. Residue cysteine 22 is the site of S-diacylglycerol cysteine attachment. Transmembrane regions (helical) follow at residues 48-68 (FVAK…TLLI), 133-153 (QMGC…YYAI), 174-194 (MVLA…SMIG), and 212-232 (IMIL…WAVG).

Belongs to the OXA1/ALB3/YidC family. Type 2 subfamily.

The protein resides in the cell membrane. Required for the insertion and/or proper folding and/or complex formation of integral membrane proteins into the membrane. Involved in integration of membrane proteins that insert both dependently and independently of the Sec translocase complex, as well as at least some lipoproteins. This chain is Membrane protein insertase YidC 2, found in Listeria monocytogenes serotype 4b (strain F2365).